The primary structure comprises 471 residues: Phosphatidylserine synthase 1 (471 aa).

Residue alanine 2 is modified to N-acetylalanine. Topologically, residues 2–35 are cytoplasmic; it reads ASCVGSRTLSKDDVNYRMHFRMINEQQVEDITID. Residues 36–56 form a helical membrane-spanning segment; it reads FFYRPHTITLLSFTIVSLMYF. At 57 to 72 the chain is on the lumenal side; it reads AFTRDDSVPEDNIWRG. Residues 73–93 form a helical membrane-spanning segment; it reads ILSVIFFFLIISVLAFPNGPF. The Cytoplasmic portion of the chain corresponds to 94-102; sequence TRPHPALWR. The helical transmembrane segment at 103-123 threads the bilayer; it reads MVFGLSVLYFLFLVFLLFLNF. At 124–160 the chain is on the lumenal side; it reads EQVKSLMYWLDPNLRYATREADIMEYAVNCHVITWER. The chain crosses the membrane as a helical span at residues 161-181; the sequence is IVSHFDIFAFGHFWGWAMKAL. Residues 182–186 are Cytoplasmic-facing; that stretch reads LIRSY. A helical transmembrane segment spans residues 187-207; that stretch reads GLCWTISITWELTELFFMHLL. Residues 208-216 are Lumenal-facing; sequence PNFAECWWD. Residues 217-237 form a helical membrane-spanning segment; it reads QVILDILLCNGGGIWLGMVVC. At 238–286 the chain is on the cytoplasmic side; sequence RFLEMRTYHWASFKDIHTTTGKIKRAVLQFTPASWTYVRWFDPKSSFQR. A helical transmembrane segment spans residues 287–307; that stretch reads VAGVYLFMIIWQLTELNTFFL. Topologically, residues 308–309 are lumenal; the sequence is KH. Residues 310 to 330 traverse the membrane as a helical segment; sequence IFVFQASHPLSWCRILFIGCI. Residues 331–355 are Cytoplasmic-facing; that stretch reads TAPTVRQYYAYLTDTQCKRVGTQCW. A helical transmembrane segment spans residues 356-376; the sequence is VFGVIGFLEAIVCIKFGQDLF. At 377–380 the chain is on the lumenal side; sequence SKTQ. Residues 381–401 traverse the membrane as a helical segment; that stretch reads ILYVVFWLLCVAFTTFLCLYG. Over 402-471 the chain is Cytoplasmic; the sequence is MVWYAEHYGH…SKVTNGVGKK (70 aa). Serine 417, serine 440, and serine 452 each carry phosphoserine. Positions 426–471 are disordered; that stretch reads ISWHHGKGSKGSEDSPPKHSSNNESHSSRRRNRHSKSKVTNGVGKK. A compositionally biased stretch (basic residues) spans 453-462; it reads SRRRNRHSKS.

The protein belongs to the phosphatidyl serine synthase family.

The protein resides in the endoplasmic reticulum membrane. The enzyme catalyses a 1,2-diacyl-sn-glycero-3-phosphoethanolamine + L-serine = a 1,2-diacyl-sn-glycero-3-phospho-L-serine + ethanolamine. The catalysed reaction is a 1,2-diacyl-sn-glycero-3-phosphocholine + L-serine = a 1,2-diacyl-sn-glycero-3-phospho-L-serine + choline. It participates in phospholipid metabolism; phosphatidylserine biosynthesis. Inhibited by exogenous phosphatidylserine. Functionally, catalyzes a base-exchange reaction in which the polar head group of phosphatidylethanolamine (PE) or phosphatidylcholine (PC) is replaced by L-serine. Catalyzes mainly the conversion of phosphatidylcholine. Also converts, in vitro and to a lesser extent, phosphatidylethanolamine. The sequence is that of Phosphatidylserine synthase 1 (PTDSS1) from Cricetulus griseus (Chinese hamster).